The sequence spans 60 residues: Large ribosomal subunit protein bL32 (60 aa).

Basic residues predominate over residues 1–16 (MAVPKRKTTPSKRGMR). The segment at 1–60 (MAVPKRKTTPSKRGMRRSADALKQPAYVENPDSGELHRPHHVDLKSGMYRGKQILKPKGE) is disordered. Positions 34–44 (GELHRPHHVDL) are enriched in basic and acidic residues.

It belongs to the bacterial ribosomal protein bL32 family.

The sequence is that of Large ribosomal subunit protein bL32 from Parvibaculum lavamentivorans (strain DS-1 / DSM 13023 / NCIMB 13966).